Here is a 199-residue protein sequence, read N- to C-terminus: Interleukin-11 (199 aa).

The signal sequence occupies residues 1–21 (MNCVCRLVLVVLSLWPDRVVA). Positions 182-190 (HLTLDWAVR) are important for interaction with IL11RA and for the stimulation of cell proliferation.

The protein belongs to the IL-6 superfamily. As to quaternary structure, interacts with either IL11RA1 or IL11RA2 to associate with IL6ST, giving rise to a multimeric signaling complex.

The protein resides in the secreted. In terms of biological role, cytokine that stimulates the proliferation of hematopoietic stem cells and megakaryocyte progenitor cells and induces megakaryocyte maturation resulting in increased platelet production. Also promotes the proliferation of hepatocytes in response to liver damage. Binding to its receptor formed by IL6ST and either IL11RA1 or IL11RA2 activates a signaling cascade that promotes cell proliferation, also in the context of various cancers. Signaling leads to the activation of intracellular protein kinases and the phosphorylation of STAT3. The interaction with the membrane-bound IL11RA and IL6ST stimulates 'classic signaling', whereas the binding of IL11 and soluble IL11RA to IL6ST stimulates 'trans-signaling'. This chain is Interleukin-11, found in Mus musculus (Mouse).